The following is a 153-amino-acid chain: Ribosomal RNA large subunit methyltransferase H (153 aa).

Residues Leu71 and Gly102 each contribute to the S-adenosyl-L-methionine site.

It belongs to the RNA methyltransferase RlmH family. Homodimer.

The protein localises to the cytoplasm. It catalyses the reaction pseudouridine(1915) in 23S rRNA + S-adenosyl-L-methionine = N(3)-methylpseudouridine(1915) in 23S rRNA + S-adenosyl-L-homocysteine + H(+). Specifically methylates the pseudouridine at position 1915 (m3Psi1915) in 23S rRNA. The protein is Ribosomal RNA large subunit methyltransferase H of Anaeromyxobacter dehalogenans (strain 2CP-C).